A 97-amino-acid chain; its full sequence is Defensin-like protein 246 (97 aa).

Residues 1-24 (MKFVAIFLVTCVLFSLFPSHLSQG) form the signal peptide. Cystine bridges form between cysteine 39/cysteine 96, cysteine 50/cysteine 79, cysteine 58/cysteine 89, and cysteine 77/cysteine 91.

It belongs to the DEFL family. As to expression, flower buds and stems.

It is found in the secreted. The protein is Defensin-like protein 246 (SCRL5) of Arabidopsis thaliana (Mouse-ear cress).